Reading from the N-terminus, the 458-residue chain is Retinoic acid receptor alpha (458 aa).

The interval 1–87 (MSSKDNTCPP…PPPLPRIYKP (87 aa)) is modulating. A disordered region spans residues 39–78 (GGLPGVQHQPPLSGYSTPSPATIETQSTSSEEIVPSPPTP). Positions 52–69 (GYSTPSPATIETQSTSSE) are enriched in polar residues. 2 consecutive NR C4-type zinc fingers follow at residues 88 to 108 (CFVC…CEGC) and 124 to 148 (CHRD…LQKC). Residues 88–153 (CFVCQDKSSG…RLQKCFEVGM (66 aa)) constitute a DNA-binding region (nuclear receptor). The tract at residues 154-182 (SKESVRNDRNKKKKESPKPEAIESYILSP) is hinge. The 235-residue stretch at 183–417 (ETQDLIEKVQ…LIQEMLENSE (235 aa)) folds into the NR LBD domain. The 9aaTAD motif lies at 407 to 415 (PLIQEMLEN). Residues 419 to 458 (LDTLGGGASSDAPVTPVAPGSCSPSLSPSSTHSSPSTHSP) are disordered. Over residues 439–458 (SCSPSLSPSSTHSSPSTHSP) the composition is skewed to low complexity.

Belongs to the nuclear hormone receptor family. NR1 subfamily. As to quaternary structure, heterodimer; with an rxr molecule. Binds DNA preferentially as a rar/rxr heterodimer.

It localises to the nucleus. In terms of biological role, receptor for retinoic acid. Retinoic acid receptors bind as heterodimers to their target response elements in response to their ligands, all-trans or 9-cis retinoic acid, and regulate gene expression in various biological processes. The rar/rxr heterodimers bind to the retinoic acid response elements (RARE) composed of tandem 5'-AGGTCA-3' sites known as DR1-DR5. Required for primary neurogenesis and for anteroposterior neural patterning. The chain is Retinoic acid receptor alpha (rara) from Xenopus laevis (African clawed frog).